A 425-amino-acid chain; its full sequence is Adenosine 3'-phospho 5'-phosphosulfate transporter 1 (425 aa).

The next 9 helical transmembrane spans lie at 27 to 47 (FLILLGYSTVATPAAILIYYV), 102 to 122 (VIILLLFFFSGIQVTLVAMGV), 147 to 167 (TQFLIFCNRIVALVLSLMILA), 232 to 252 (YSWFEYGCGCTIAFGASLFLL), 263 to 283 (ITYTSFSGMILMAGYLLFDAF), 303 to 323 (MMFGVNFFSAILCAVSLIEQG), 342 to 360 (VFLLSLSGAIGQIFIYSTI), 365 to 387 (PIVFAVIMTIRQMLSIVLSTIMY), and 391 to 411 (LTFLAAIGFMIVFAAIFVDIH).

This sequence belongs to the nucleotide-sugar transporter family. SLC35B subfamily.

The protein localises to the golgi apparatus membrane. Functionally, mediates the transport of adenosine 3'-phospho 5'-phosphosulfate (PAPS), from cytosol into Golgi. PAPS is a universal sulfuryl donor for sulfation events that take place in the Golgi. This chain is Adenosine 3'-phospho 5'-phosphosulfate transporter 1 (pst-1), found in Caenorhabditis elegans.